Here is a 143-residue protein sequence, read N- to C-terminus: Transcription antitermination protein NusB (143 aa).

This sequence belongs to the NusB family.

Involved in transcription antitermination. Required for transcription of ribosomal RNA (rRNA) genes. Binds specifically to the boxA antiterminator sequence of the ribosomal RNA (rrn) operons. The chain is Transcription antitermination protein NusB from Desulfatibacillum aliphaticivorans.